The primary structure comprises 418 residues: Serine hydroxymethyltransferase (418 aa).

(6S)-5,6,7,8-tetrahydrofolate is bound by residues Leu-121 and Gly-125 to Leu-127. N6-(pyridoxal phosphate)lysine is present on Lys-230. Residue Ser-355–Phe-357 coordinates (6S)-5,6,7,8-tetrahydrofolate.

The protein belongs to the SHMT family. Homodimer. The cofactor is pyridoxal 5'-phosphate.

The protein resides in the cytoplasm. The enzyme catalyses (6R)-5,10-methylene-5,6,7,8-tetrahydrofolate + glycine + H2O = (6S)-5,6,7,8-tetrahydrofolate + L-serine. The protein operates within one-carbon metabolism; tetrahydrofolate interconversion. It participates in amino-acid biosynthesis; glycine biosynthesis; glycine from L-serine: step 1/1. Its function is as follows. Catalyzes the reversible interconversion of serine and glycine with tetrahydrofolate (THF) serving as the one-carbon carrier. This reaction serves as the major source of one-carbon groups required for the biosynthesis of purines, thymidylate, methionine, and other important biomolecules. Also exhibits THF-independent aldolase activity toward beta-hydroxyamino acids, producing glycine and aldehydes, via a retro-aldol mechanism. This chain is Serine hydroxymethyltransferase, found in Streptococcus pyogenes serotype M1.